The following is a 428-amino-acid chain: Adenylosuccinate synthetase (428 aa).

Residues 12 to 18 (GDEGKGK) and 40 to 42 (GHT) contribute to the GTP site. Asp-13 acts as the Proton acceptor in catalysis. The Mg(2+) site is built by Asp-13 and Gly-40. IMP-binding positions include 13 to 16 (DEGK), 38 to 41 (NAGH), Thr-130, Arg-144, Gln-225, Thr-240, and Arg-304. The active-site Proton donor is His-41. 300-306 (VTTGRAR) contacts substrate. Residues Arg-306, 332–334 (KID), and 414–416 (SVG) contribute to the GTP site.

It belongs to the adenylosuccinate synthetase family. In terms of assembly, homodimer. Mg(2+) serves as cofactor.

It localises to the cytoplasm. It catalyses the reaction IMP + L-aspartate + GTP = N(6)-(1,2-dicarboxyethyl)-AMP + GDP + phosphate + 2 H(+). It participates in purine metabolism; AMP biosynthesis via de novo pathway; AMP from IMP: step 1/2. Functionally, plays an important role in the de novo pathway of purine nucleotide biosynthesis. Catalyzes the first committed step in the biosynthesis of AMP from IMP. The chain is Adenylosuccinate synthetase from Clostridium kluyveri (strain ATCC 8527 / DSM 555 / NBRC 12016 / NCIMB 10680 / K1).